A 455-amino-acid chain; its full sequence is uncharacterized protein (455 aa).

Positions 1–20 (MGCCLSKKPSPSLPSSVKPS) are enriched in low complexity. Disordered stretches follow at residues 1–234 (MGCC…IPAT) and 258–304 (RIAA…QNTK). 5 stretches are compositionally biased toward basic and acidic residues: residues 35–46 (EEAKPKSEKLNQ), 61–75 (SHEE…DKDS), 129–143 (RSFD…RGGD), 156–166 (RGVERVHGSPR), and 173–186 (PSRE…RERG). The segment covering 213 to 224 (SCGSSVNSSNNR) has biased composition (polar residues). The span at 260 to 271 (AASPRSKSPARA) shows a compositional bias: low complexity.

This is an uncharacterized protein from Arabidopsis thaliana (Mouse-ear cress).